A 611-amino-acid chain; its full sequence is DNA-directed RNA polymerase subunit Rpo2C (611 aa).

Zn(2+)-binding residues include Cys-547, Cys-550, Cys-565, and Cys-568.

Belongs to the RNA polymerase beta chain family. As to quaternary structure, part of the RNA polymerase complex. Zn(2+) is required as a cofactor.

The protein resides in the cytoplasm. The catalysed reaction is RNA(n) + a ribonucleoside 5'-triphosphate = RNA(n+1) + diphosphate. DNA-dependent RNA polymerase (RNAP) catalyzes the transcription of DNA into RNA using the four ribonucleoside triphosphates as substrates. The Rpo2 subunit (Rpo2N and Rpo2C in this organism) is implicated in DNA promoter recognition and in nucleotide binding. The polypeptide is DNA-directed RNA polymerase subunit Rpo2C (Methanococcus vannielii (strain ATCC 35089 / DSM 1224 / JCM 13029 / OCM 148 / SB)).